Here is a 190-residue protein sequence, read N- to C-terminus: Sec-independent protein translocase protein TatB (190 aa).

The helical transmembrane segment at 2–22 threads the bilayer; sequence LPDIGGTELLVIAAVALIVVG. Residues 130–190 form a disordered region; the sequence is IVSKPARKPP…KASTNSDITS (61 aa). A compositionally biased stretch (basic residues) spans 134–144; the sequence is PARKPPAKKAA. Residues 145 to 163 show a composition bias toward low complexity; the sequence is AKPAAKAELVSKPKASAKA.

This sequence belongs to the TatB family. As to quaternary structure, the Tat system comprises two distinct complexes: a TatABC complex, containing multiple copies of TatA, TatB and TatC subunits, and a separate TatA complex, containing only TatA subunits. Substrates initially bind to the TatABC complex, which probably triggers association of the separate TatA complex to form the active translocon.

It is found in the cell inner membrane. Part of the twin-arginine translocation (Tat) system that transports large folded proteins containing a characteristic twin-arginine motif in their signal peptide across membranes. Together with TatC, TatB is part of a receptor directly interacting with Tat signal peptides. TatB may form an oligomeric binding site that transiently accommodates folded Tat precursor proteins before their translocation. The sequence is that of Sec-independent protein translocase protein TatB from Caulobacter sp. (strain K31).